The chain runs to 160 residues: Non-secretory ribonuclease (160 aa).

Residues 1–27 form the signal peptide; sequence MVPKLFTSPICLLLLLGLMGVEGSLHA. C-linked (Man) tryptophan glycosylation occurs at W34. H42 serves as the catalytic Proton acceptor. N-linked (GlcNAc...) asparagine glycosylation is present at N44. 4 disulfides stabilise this stretch: C50/C110, C64/C122, C82/C137, and C89/C98. 3'-nitrotyrosine is present on Y60. 65-69 serves as a coordination point for substrate; sequence KNQNT. Residues N92, N111, and N138 are each glycosylated (N-linked (GlcNAc...) asparagine). H155 acts as the Proton donor in catalysis.

The protein belongs to the pancreatic ribonuclease family. As to quaternary structure, interacts with and forms a tight 1:1 complex with RNH1. Dimerization of two such complexes may occur.

It localises to the lysosome. Its subcellular location is the cytoplasmic granule. The catalysed reaction is an [RNA] containing cytidine + H2O = an [RNA]-3'-cytidine-3'-phosphate + a 5'-hydroxy-ribonucleotide-3'-[RNA].. It carries out the reaction an [RNA] containing uridine + H2O = an [RNA]-3'-uridine-3'-phosphate + a 5'-hydroxy-ribonucleotide-3'-[RNA].. In terms of biological role, this is a non-secretory ribonuclease. It is a pyrimidine specific nuclease with a slight preference for U. Cytotoxin and helminthotoxin. Possesses a wide variety of biological activities. The protein is Non-secretory ribonuclease (RNASE2) of Macaca nemestrina (Pig-tailed macaque).